A 55-amino-acid chain; its full sequence is Large ribosomal subunit protein bL32 (55 aa).

This sequence belongs to the bacterial ribosomal protein bL32 family.

This chain is Large ribosomal subunit protein bL32, found in Aeromonas hydrophila subsp. hydrophila (strain ATCC 7966 / DSM 30187 / BCRC 13018 / CCUG 14551 / JCM 1027 / KCTC 2358 / NCIMB 9240 / NCTC 8049).